The chain runs to 1258 residues: Phosphatidylinositol 3,4,5-trisphosphate 5-phosphatase 2 (1258 aa).

The SH2 domain occupies 21-117 (WYHRDLSRAA…GLVCALLLPV (97 aa)). Residues 119–132 (GEREPDPPDDRDAS) are compositionally biased toward basic and acidic residues. Positions 119–180 (GEREPDPPDD…AESAPNGLST (62 aa)) are disordered. Ser-132 bears the Phosphoserine mark. Positions 145 to 155 (SGSTSISAPTG) are enriched in polar residues. A compositionally biased stretch (pro residues) spans 156 to 166 (PSSPLPAPETP). Residue Thr-165 is modified to Phosphothreonine. Phosphoserine is present on residues Ser-241 and Ser-352. Position 886 is a phosphotyrosine (Tyr-886). Ser-890 is modified (phosphoserine). The disordered stretch occupies residues 897 to 1118 (GAKSKAPSVS…FLGEVASGDD (222 aa)). The span at 938–950 (PPPTGRPPAPPRA) shows a compositional bias: pro residues. The short motif at 944-949 (PPAPPR) is the SH3-binding element. Basic and acidic residues predominate over residues 951–965 (APREEPLTPRLKPEG). At Thr-958 the chain carries Phosphothreonine. The NPXY motif motif lies at 983–986 (NPAY). A Phosphotyrosine; by SRC modification is found at Tyr-986. Pro residues-rich tracts occupy residues 996 to 1007 (LLPPEPPSPARA), 1048 to 1059 (LPPPDFPPPPLP), and 1087 to 1104 (GPPP…PGPS). Ser-1131 carries the post-translational modification Phosphoserine. Residues Tyr-1135 and Tyr-1162 each carry the phosphotyrosine modification. The SAM domain maps to 1196–1258 (LGEAGMSAWL…LLLDTLQLSK (63 aa)). A Phosphoserine modification is found at Ser-1257.

The protein belongs to the inositol 1,4,5-trisphosphate 5-phosphatase family. In terms of assembly, interacts with tyrosine phosphorylated form of SHC1. Interacts with EGFR. Upon stimulation by the EGF signaling pathway, it forms a complex with SHC1 and EGFR. Interacts with cytoskeletal protein SORBS3/vinexin, promoting its localization to the periphery of cells. Forms a complex with filamin (FLNA or FLNB), actin, GPIb (GP1BA or GP1BB) that regulates cortical and submembraneous actin. Interacts with c-Met/MET, when c-Met/MET is phosphorylated on 'Tyr-1356'. Interacts with p130Cas/BCAR1. Interacts with CENTD3/ARAP3 via its SAM domain. Interacts with c-Cbl/CBL and CAP/SORBS1. Interacts with activated EPHA2 receptor. Interacts with receptor FCGR2A. Interacts with receptor FCGR2B. Interacts with tyrosine kinase ABL1. Interacts with tyrosine kinase TEC. Interacts with CSF1R. Interacts (via N-terminus) with SH3YL1 (via SH3 domain). Interacts with FCRL6 (tyrosine phosphorylated form). Interacts (via SH2 domain) with tyrosine phosphorylated KLRC1 (via ITIM). Interacts with NEDD9/HEF1. Tyrosine phosphorylated by the members of the SRC family after exposure to a diverse array of extracellular stimuli such as insulin, growth factors such as EGF or PDGF, chemokines, integrin ligands and hypertonic and oxidative stress. May be phosphorylated upon IgG receptor FCGR2B-binding. Phosphorylated at Tyr-986 following cell attachment and spreading. Phosphorylated at Tyr-1162 following EGF signaling pathway stimulation. Phosphorylated at Thr-958 in response to PDGF. Widely expressed, most prominently in skeletal muscle, heart and brain. Present in platelets. Expressed in transformed myeloid cells and in primary macrophages, but not in peripheral blood monocytes.

It localises to the cytoplasm. It is found in the cytosol. The protein resides in the cytoskeleton. Its subcellular location is the membrane. The protein localises to the cell projection. It localises to the filopodium. It is found in the lamellipodium. The protein resides in the basal cell membrane. Its subcellular location is the nucleus. The protein localises to the nucleus speckle. It localises to the spindle pole. The catalysed reaction is a 1,2-diacyl-sn-glycero-3-phospho-(1D-myo-inositol-3,4,5-trisphosphate) + H2O = a 1,2-diacyl-sn-glycero-3-phospho-(1D-myo-inositol-3,4-bisphosphate) + phosphate. It carries out the reaction 1,2-dioctanoyl-sn-glycero-3-phospho-(1D-myo-inositol-3,4,5-trisphosphate) + H2O = 1,2-dioctanoyl-sn-glycero-3-phospho-(1D-myo-inositol-3,4-bisphosphate) + phosphate. The enzyme catalyses 1,2-dihexadecanoyl-sn-glycero-3-phospho-(1D-myo-inositol-3,4,5-trisphosphate) + H2O = 1,2-dihexadecanoyl-sn-glycero-3-phospho-(1D-myo-inositol-3,4-bisphosphate) + phosphate. With respect to regulation, activated upon translocation to the sites of synthesis of PtdIns(3,4,5)P3 in the membrane. Enzymatic activity is enhanced in the presence of phosphatidylserine. Functionally, phosphatidylinositol (PtdIns) phosphatase that specifically hydrolyzes the 5-phosphate of phosphatidylinositol-3,4,5-trisphosphate (PtdIns(3,4,5)P3) to produce PtdIns(3,4)P2, thereby negatively regulating the PI3K (phosphoinositide 3-kinase) pathways. Required for correct mitotic spindle orientation and therefore progression of mitosis. Plays a central role in regulation of PI3K-dependent insulin signaling, although the precise molecular mechanisms and signaling pathways remain unclear. While overexpression reduces both insulin-stimulated MAP kinase and Akt activation, its absence does not affect insulin signaling or GLUT4 trafficking. Confers resistance to dietary obesity. May act by regulating AKT2, but not AKT1, phosphorylation at the plasma membrane. Part of a signaling pathway that regulates actin cytoskeleton remodeling. Required for the maintenance and dynamic remodeling of actin structures as well as in endocytosis, having a major impact on ligand-induced EGFR internalization and degradation. Participates in regulation of cortical and submembraneous actin by hydrolyzing PtdIns(3,4,5)P3 thereby regulating membrane ruffling. Regulates cell adhesion and cell spreading. Required for HGF-mediated lamellipodium formation, cell scattering and spreading. Acts as a negative regulator of EPHA2 receptor endocytosis by inhibiting via PI3K-dependent Rac1 activation. Acts as a regulator of neuritogenesis by regulating PtdIns(3,4,5)P3 level and is required to form an initial protrusive pattern, and later, maintain proper neurite outgrowth. Acts as a negative regulator of the FC-gamma-RIIA receptor (FCGR2A). Mediates signaling from the FC-gamma-RIIB receptor (FCGR2B), playing a central role in terminating signal transduction from activating immune/hematopoietic cell receptor systems. Involved in EGF signaling pathway. Upon stimulation by EGF, it is recruited by EGFR and dephosphorylates PtdIns(3,4,5)P3. Plays a negative role in regulating the PI3K-PKB pathway, possibly by inhibiting PKB activity. Down-regulates Fc-gamma-R-mediated phagocytosis in macrophages independently of INPP5D/SHIP1. In macrophages, down-regulates NF-kappa-B-dependent gene transcription by regulating macrophage colony-stimulating factor (M-CSF)-induced signaling. Plays a role in the localization of AURKA and NEDD9/HEF1 to the basolateral membrane at interphase in polarized cysts, thereby mediates cell cycle homeostasis, cell polarization and cilia assembly. Additionally promotion of cilia growth is also facilitated by hydrolysis of (PtdIns(3,4,5)P3) to PtdIns(3,4)P2. Promotes formation of apical membrane-initiation sites during the initial stages of lumen formation via Rho family-induced actin filament organization and CTNNB1 localization to cell-cell contacts. May also hydrolyze PtdIns(1,3,4,5)P4, and could thus affect the levels of the higher inositol polyphosphates like InsP6. Involved in endochondral ossification. The protein is Phosphatidylinositol 3,4,5-trisphosphate 5-phosphatase 2 of Homo sapiens (Human).